A 235-amino-acid polypeptide reads, in one-letter code: tRNA (guanine-N(1)-)-methyltransferase (235 aa).

S-adenosyl-L-methionine contacts are provided by residues Gly114 and 134–139 (IGDYIL).

This sequence belongs to the RNA methyltransferase TrmD family. In terms of assembly, homodimer.

It is found in the cytoplasm. The enzyme catalyses guanosine(37) in tRNA + S-adenosyl-L-methionine = N(1)-methylguanosine(37) in tRNA + S-adenosyl-L-homocysteine + H(+). Functionally, specifically methylates guanosine-37 in various tRNAs. The protein is tRNA (guanine-N(1)-)-methyltransferase of Ehrlichia ruminantium (strain Welgevonden).